Reading from the N-terminus, the 439-residue chain is Tol-Pal system protein TolB (439 aa).

An N-terminal signal peptide occupies residues 1 to 24 (MRNGMRKIIAGVFIFVFLISNLYA).

This sequence belongs to the TolB family. The Tol-Pal system is composed of five core proteins: the inner membrane proteins TolA, TolQ and TolR, the periplasmic protein TolB and the outer membrane protein Pal. They form a network linking the inner and outer membranes and the peptidoglycan layer.

It is found in the periplasm. Functionally, part of the Tol-Pal system, which plays a role in outer membrane invagination during cell division and is important for maintaining outer membrane integrity. The sequence is that of Tol-Pal system protein TolB from Francisella tularensis subsp. tularensis (strain FSC 198).